Reading from the N-terminus, the 430-residue chain is Adenylosuccinate synthetase (430 aa).

GTP-binding positions include 12 to 18 (GDEGKGK) and 40 to 42 (GHT). The active-site Proton acceptor is D13. Mg(2+) contacts are provided by D13 and G40. IMP contacts are provided by residues 13 to 16 (DEGK), 38 to 41 (NAGH), T128, R142, Q223, T238, and R302. Catalysis depends on H41, which acts as the Proton donor. Position 298–304 (298–304 (TTTGRPR)) interacts with substrate. GTP-binding positions include R304, 330–332 (SID), and 412–414 (SVG).

The protein belongs to the adenylosuccinate synthetase family. In terms of assembly, homodimer. The cofactor is Mg(2+).

Its subcellular location is the cytoplasm. The enzyme catalyses IMP + L-aspartate + GTP = N(6)-(1,2-dicarboxyethyl)-AMP + GDP + phosphate + 2 H(+). It participates in purine metabolism; AMP biosynthesis via de novo pathway; AMP from IMP: step 1/2. Its function is as follows. Plays an important role in the de novo pathway of purine nucleotide biosynthesis. Catalyzes the first committed step in the biosynthesis of AMP from IMP. This chain is Adenylosuccinate synthetase, found in Streptococcus pyogenes serotype M4 (strain MGAS10750).